We begin with the raw amino-acid sequence, 403 residues long: Para-nitrophenol 4-monooxygenase (403 aa).

FAD-binding positions include 6–35 (GVVV…VLEA) and 279–289 (FRRGRVVLAGD).

Belongs to the PheA/TfdB FAD monooxygenase family. Monomer. Requires FAD as cofactor.

It carries out the reaction 4-nitrophenol + NADPH + O2 + H(+) = 1,4-benzoquinone + nitrite + NADP(+) + H2O. The protein operates within xenobiotic degradation; 4-nitrophenol degradation. Its function is as follows. Involved in the degradation of para-nitrophenol (4-NP). Catalyzes oxidation of 4-nitrophenol (4-NP) at position 4 with concomitant removal of the nitro group as nitrite and production of para-benzoquinone. This Pseudomonas sp. (strain WBC-3) protein is Para-nitrophenol 4-monooxygenase (pnpA).